Consider the following 302-residue polypeptide: Citrate lyase subunit beta (302 aa).

Substrate contacts are provided by Arg76 and Glu139. The Mg(2+) site is built by Glu139 and Asp166.

It belongs to the HpcH/HpaI aldolase family. Citrate lyase beta subunit subfamily. In terms of assembly, oligomer with a subunit composition of (alpha,beta,gamma)6. Requires Mg(2+) as cofactor.

The protein resides in the cytoplasm. The catalysed reaction is citrate = oxaloacetate + acetate. It carries out the reaction (3S)-citryl-CoA = oxaloacetate + acetyl-CoA. Represents a citryl-ACP lyase. The polypeptide is Citrate lyase subunit beta (citE) (Escherichia coli O6:H1 (strain CFT073 / ATCC 700928 / UPEC)).